The sequence spans 256 residues: 4-hydroxy-tetrahydrodipicolinate reductase (256 aa).

8–13 (GATGRV) serves as a coordination point for NAD(+). K36 is an NADP(+) binding site. NAD(+) is bound by residues 89-91 (GTT) and 113-116 (ATNM). The active-site Proton donor/acceptor is the H145. H146 is a (S)-2,3,4,5-tetrahydrodipicolinate binding site. K149 (proton donor) is an active-site residue. Residue 155-156 (GT) participates in (S)-2,3,4,5-tetrahydrodipicolinate binding.

It belongs to the DapB family.

It is found in the cytoplasm. It catalyses the reaction (S)-2,3,4,5-tetrahydrodipicolinate + NAD(+) + H2O = (2S,4S)-4-hydroxy-2,3,4,5-tetrahydrodipicolinate + NADH + H(+). The enzyme catalyses (S)-2,3,4,5-tetrahydrodipicolinate + NADP(+) + H2O = (2S,4S)-4-hydroxy-2,3,4,5-tetrahydrodipicolinate + NADPH + H(+). The protein operates within amino-acid biosynthesis; L-lysine biosynthesis via DAP pathway; (S)-tetrahydrodipicolinate from L-aspartate: step 4/4. Functionally, catalyzes the conversion of 4-hydroxy-tetrahydrodipicolinate (HTPA) to tetrahydrodipicolinate. The sequence is that of 4-hydroxy-tetrahydrodipicolinate reductase from Wolinella succinogenes (strain ATCC 29543 / DSM 1740 / CCUG 13145 / JCM 31913 / LMG 7466 / NCTC 11488 / FDC 602W) (Vibrio succinogenes).